The primary structure comprises 122 residues: RxLR effector protein Avh52 (122 aa).

Residues M1–A21 form the signal peptide. The RxLR-dEER motif lies at R50–R68. The tract at residues S69–V86 is TAP1-binding. Residues K87–K98 form a nuclear localization signal (NLS) region.

The protein belongs to the RxLR effector family. Interacts with host acetyl transferase TAP1.

The protein resides in the secreted. It localises to the host nucleus. Its function is as follows. Effector that suppresses plant defense responses during the early stages of pathogen infection. Suppresses cell death induced by effectors and PAMPs in plant hosts. Interacts with host acetyltransferase TAP1 and causes TAP1 relocation into the nucleus where it acetylates histones H2A and H3 during early infection, thereby promoting susceptibility of host plant to P.sojae. In Phytophthora sojae (Soybean stem and root rot agent), this protein is RxLR effector protein Avh52.